The sequence spans 9439 residues: Extracellular matrix-binding protein ebh (9439 aa).

29 FIVAR domains span residues 1815 to 1871 (ARRR…VNSA), 1901 to 1957 (AKEQ…INDA), 1985 to 2041 (AYDT…VRDA), 2071 to 2127 (AKKR…ITSE), 2155 to 2211 (AYNK…VTQA), 2241 to 2297 (AKNR…ISSE), 2325 to 2381 (AYNK…VEDA), 2411 to 2467 (AKEK…ITEN), 2488 to 2551 (DTTS…VNNA), 2581 to 2638 (ARNR…STEI), 2665 to 2720 (AKNQ…IRTN), 2748 to 2804 (AKTA…VSDE), 2832 to 2888 (AYNQ…VNNA), 2918 to 2974 (AKEQ…ISNA), 3002 to 3058 (AYNQ…VTAA), 3088 to 3144 (AKQQ…ITNE), 3172 to 3228 (AYNQ…VAQA), 3258 to 3314 (AKNQ…ISDE), 3335 to 3398 (DTTE…VNNA), 3428 to 3484 (ARLN…ITTE), 3512 to 3567 (AKTA…IKTN), 3595 to 3650 (IKRQ…VKES), 3678 to 3733 (AKNR…IRQN), 3802 to 3860 (SMTA…IDQK), 3928 to 3983 (AMTQ…LDPA), 4056 to 4114 (AMQA…VNQK), 4182 to 4240 (SMGT…VDNA), 4308 to 4365 (AMHT…INQK), and 4433 to 4491 (VMEQ…IEQA). A compositionally biased stretch (basic and acidic residues) spans 2495-2507 (EVRKLSRRGDTNN). A disordered region spans residues 2495 to 2514 (EVRKLSRRGDTNNKKPSSVS). The segment covering 2925–2938 (AVDQVPSTEGMTQQ) has biased composition (polar residues). Residues 2925–2951 (AVDQVPSTEGMTQQTKDDYNSKQQAAQ) form a disordered region. Residues 4522–4542 (LSGLTNEQKPKENQAVNGAQT) are disordered. The region spanning 4559–4617 (SMQTLRDLVNNQNAIHSTSNYFNEDSTQKNTYDNAIDNGSTYITGQHNPELNKSTIDQT) is the FIVAR 30 domain. The interval 4648 to 4671 (LGYLNDPQKSGEESLVNGSNTRSE) is disordered. FIVAR domains follow at residues 4685-4743 (AMKQ…IEQK), 4811-4869 (AMQA…IEQA), 4937-4995 (AMSN…IEQA), 5063-5115 (AMEA…VLDK), 5189-5246 (AMLG…INQL), 5314-5372 (LMGA…VTTA), 5440-5498 (AMGE…IDQA), 5566-5624 (AMKK…ITNA), 5692-5750 (AMKQ…IADT), 5818-5875 (DMST…LQDL), 5943-6000 (AMKA…IKQA), 6068-6126 (KMEE…INRT), 6194-6252 (AMQQ…IQAI), and 6320-6378 (EMGT…IADA). Residues 5699–5712 (QVNQDDQISNSSPF) show a composition bias toward polar residues. The disordered stretch occupies residues 5699–5719 (QVNQDDQISNSSPFINEDSDK). The segment at 6413 to 6434 (NNSQRQSEHDEINSAPSRTEVS) is disordered. FIVAR domains are found at residues 6446–6504 (AMRQ…IEDA), 6572–6630 (AMKA…INRA), 6698–6755 (SMNQ…IDQA), 6823–6877 (TMKA…ANDE), 6949–7007 (AMKK…INTI), 7075–7133 (SMNT…VERA), 7201–7259 (DMKK…IENA), 7327–7384 (AMKH…IKQL), 7452–7510 (AMEN…IEHA), 7578–7636 (AMKA…INSI), 7704–7762 (AMET…VDIV), 7830–7888 (AMKS…VRQA), 7956–8010 (VMGK…TKQA), 8078–8137 (IMGE…IDTF), 8205–8264 (AMKS…IQGL), 8332–8391 (AMKD…VLGL), 8459–8518 (KMKL…IQHL), and 8587–8643 (AMQG…ANII). The chain crosses the membrane as a helical span at residues 9306–9324 (TVGVITLTGLLSSFWLVLA). 3 stretches are compositionally biased toward basic and acidic residues: residues 9363–9375 (DKEE…DKHS), 9386–9395 (EKQLSEEDIH), and 9404–9413 (QNSDNKDTKQ). The disordered stretch occupies residues 9363-9439 (DKEEQIQNDD…VVKTKKRSKK (77 aa)). Over residues 9414 to 9439 (KKVTSKKKKTPQSTKKVVKTKKRSKK) the composition is skewed to basic residues.

The protein localises to the cell membrane. The polypeptide is Extracellular matrix-binding protein ebh (ebh) (Staphylococcus epidermidis (strain ATCC 35984 / DSM 28319 / BCRC 17069 / CCUG 31568 / BM 3577 / RP62A)).